We begin with the raw amino-acid sequence, 131 residues long: Large ribosomal subunit protein bL19 (131 aa).

The interval 112–131 (KSARIAERAGGPKASASTEA) is disordered.

Belongs to the bacterial ribosomal protein bL19 family.

This protein is located at the 30S-50S ribosomal subunit interface and may play a role in the structure and function of the aminoacyl-tRNA binding site. This is Large ribosomal subunit protein bL19 from Caulobacter vibrioides (strain ATCC 19089 / CIP 103742 / CB 15) (Caulobacter crescentus).